We begin with the raw amino-acid sequence, 155 residues long: MLP-like protein 423 (155 aa).

It belongs to the MLP family.

This is MLP-like protein 423 (MLP423) from Arabidopsis thaliana (Mouse-ear cress).